Reading from the N-terminus, the 434-residue chain is Gamma-enolase (434 aa).

The residue at position 2 (Ser2) is an N-acetylserine. Lys5 carries the N6-acetyllysine modification. Thr26 is modified (phosphothreonine). Ser40 lines the Mg(2+) pocket. At Tyr44 the chain carries Phosphotyrosine. Lys60 is subject to N6-acetyllysine; alternate. Lys60 is modified (N6-succinyllysine; alternate). Residue Lys64 is modified to N6-acetyllysine. Lys89 carries the post-translational modification N6-acetyllysine; alternate. At Lys89 the chain carries N6-succinyllysine; alternate. The substrate site is built by His158 and Glu167. Lys193, Lys197, and Lys199 each carry N6-acetyllysine. Lys202 bears the N6-acetyllysine; alternate mark. Lys202 participates in a covalent cross-link: Glycyl lysine isopeptide (Lys-Gly) (interchain with G-Cter in SUMO2); alternate. Catalysis depends on Glu210, which acts as the Proton donor. 2 positions are modified to N6-acetyllysine; alternate: Lys228 and Lys233. Lys228 carries the N6-succinyllysine; alternate modification. The residue at position 233 (Lys233) is an N6-(2-hydroxyisobutyryl)lysine; alternate. Position 245 (Asp245) interacts with Mg(2+). N6-acetyllysine is present on Lys256. Phosphoserine is present on Ser263. Tyr287 is subject to Phosphotyrosine. A Phosphoserine modification is found at Ser291. The Mg(2+) site is built by Glu293 and Asp318. Glu293 and Asp318 together coordinate substrate. N6-acetyllysine is present on residues Lys335 and Lys343. Catalysis depends on Lys343, which acts as the Proton acceptor. Substrate is bound by residues 370-373 (SHRS) and Lys394. Position 406 is an N6-acetyllysine (Lys406).

It belongs to the enolase family. In terms of assembly, mammalian enolase is composed of 3 isozyme subunits, alpha, beta and gamma, which can form homodimers or heterodimers which are cell-type and development-specific. Requires Mg(2+) as cofactor. As to expression, skeletal muscle (at protein level). The alpha/alpha homodimer is expressed in embryo and in most adult tissues. The alpha/beta heterodimer and the beta/beta homodimer are found in striated muscle, and the alpha/gamma heterodimer and the gamma/gamma homodimer in neurons.

It is found in the cytoplasm. Its subcellular location is the cell membrane. The catalysed reaction is (2R)-2-phosphoglycerate = phosphoenolpyruvate + H2O. It functions in the pathway carbohydrate degradation; glycolysis; pyruvate from D-glyceraldehyde 3-phosphate: step 4/5. Its function is as follows. Has neurotrophic and neuroprotective properties on a broad spectrum of central nervous system (CNS) neurons. Binds, in a calcium-dependent manner, to cultured neocortical neurons and promotes cell survival. This chain is Gamma-enolase (Eno2), found in Mus musculus (Mouse).